The primary structure comprises 282 residues: 2-dehydro-3-deoxyphosphooctonate aldolase (282 aa).

This sequence belongs to the KdsA family.

The protein localises to the cytoplasm. It carries out the reaction D-arabinose 5-phosphate + phosphoenolpyruvate + H2O = 3-deoxy-alpha-D-manno-2-octulosonate-8-phosphate + phosphate. Its pathway is carbohydrate biosynthesis; 3-deoxy-D-manno-octulosonate biosynthesis; 3-deoxy-D-manno-octulosonate from D-ribulose 5-phosphate: step 2/3. It participates in bacterial outer membrane biogenesis; lipopolysaccharide biosynthesis. The polypeptide is 2-dehydro-3-deoxyphosphooctonate aldolase (Shewanella oneidensis (strain ATCC 700550 / JCM 31522 / CIP 106686 / LMG 19005 / NCIMB 14063 / MR-1)).